The sequence spans 232 residues: Orotidine 5'-phosphate decarboxylase (232 aa).

Residues Asp12, Lys34, Asp61 to Thr70, Thr116, Arg177, Gln186, Gly206, and Arg207 contribute to the substrate site. The active-site Proton donor is the Lys63.

Belongs to the OMP decarboxylase family. Type 1 subfamily. As to quaternary structure, homodimer.

It carries out the reaction orotidine 5'-phosphate + H(+) = UMP + CO2. Its pathway is pyrimidine metabolism; UMP biosynthesis via de novo pathway; UMP from orotate: step 2/2. Its function is as follows. Catalyzes the decarboxylation of orotidine 5'-monophosphate (OMP) to uridine 5'-monophosphate (UMP). In Sinorhizobium medicae (strain WSM419) (Ensifer medicae), this protein is Orotidine 5'-phosphate decarboxylase.